We begin with the raw amino-acid sequence, 155 residues long: Endoribonuclease YbeY (155 aa).

Zn(2+) is bound by residues histidine 114, histidine 118, and histidine 124.

It belongs to the endoribonuclease YbeY family. Zn(2+) is required as a cofactor.

The protein resides in the cytoplasm. Functionally, single strand-specific metallo-endoribonuclease involved in late-stage 70S ribosome quality control and in maturation of the 3' terminus of the 16S rRNA. The chain is Endoribonuclease YbeY from Baumannia cicadellinicola subsp. Homalodisca coagulata.